The primary structure comprises 158 residues: Small ribosomal subunit protein uS7 (158 aa).

Belongs to the universal ribosomal protein uS7 family. In terms of assembly, part of the 30S ribosomal subunit. Contacts proteins S9 and S11.

Functionally, one of the primary rRNA binding proteins, it binds directly to 16S rRNA where it nucleates assembly of the head domain of the 30S subunit. Is located at the subunit interface close to the decoding center, probably blocks exit of the E-site tRNA. The protein is Small ribosomal subunit protein uS7 of Bacteroides fragilis (strain YCH46).